The chain runs to 313 residues: Putative serine protease 29 (313 aa).

A compositionally biased stretch (pro residues) spans 1 to 22 (MPTTPDPGSEPPARTPRPPPLT). The segment at 1–27 (MPTTPDPGSEPPARTPRPPPLTPGLSP) is disordered. The 243-residue stretch at 68–310 (IVGGHNAPPG…YVPWILQQVG (243 aa)) folds into the Peptidase S1 domain. An intrachain disulfide couples Cys99 to Cys115. His114 functions as the Charge relay system in the catalytic mechanism. Asn143 carries an N-linked (GlcNAc...) asparagine glycan. The Charge relay system role is filled by Asp161. Cystine bridges form between Cys193–Cys268, Cys226–Cys249, and Cys258–Cys286. Ser262 acts as the Charge relay system in catalysis.

This sequence belongs to the peptidase S1 family.

The protein resides in the secreted. This chain is Putative serine protease 29 (PRSS29P), found in Homo sapiens (Human).